Reading from the N-terminus, the 163-residue chain is Nucleotide-binding protein LA_3406 (163 aa).

This sequence belongs to the YajQ family.

Nucleotide-binding protein. The chain is Nucleotide-binding protein LA_3406 from Leptospira interrogans serogroup Icterohaemorrhagiae serovar Lai (strain 56601).